The primary structure comprises 217 residues: Large ribosomal subunit protein uL29m (217 aa).

This sequence belongs to the universal ribosomal protein uL29 family. In terms of assembly, component of the mitochondrial large ribosomal subunit. Mature mitochondrial ribosomes consist of a small (37S) and a large (54S) subunit. The 37S subunit contains at least 33 different proteins and 1 molecule of RNA (15S). The 54S subunit contains at least 45 different proteins and 1 molecule of RNA (21S).

Its subcellular location is the mitochondrion. This chain is Large ribosomal subunit protein uL29m (mrpl4), found in Aspergillus fumigatus (strain ATCC MYA-4609 / CBS 101355 / FGSC A1100 / Af293) (Neosartorya fumigata).